A 146-amino-acid chain; its full sequence is Kappa-casein (146 aa).

3 O-linked (GalNAc...) threonine glycosylation sites follow: T107, T112, and T118. S143 carries the phosphoserine modification.

Belongs to the kappa-casein family. Mammary gland specific. Secreted in milk.

It is found in the secreted. In terms of biological role, kappa-casein stabilizes micelle formation, preventing casein precipitation in milk. This Dicotyles tajacu (Collared peccary) protein is Kappa-casein (CSN3).